We begin with the raw amino-acid sequence, 51 residues long: Insulin (51 aa).

Disulfide bonds link Cys-7/Cys-36, Cys-19/Cys-49, and Cys-35/Cys-40.

It belongs to the insulin family. In terms of assembly, heterodimer of a B chain and an A chain linked by two disulfide bonds.

Its subcellular location is the secreted. Insulin decreases blood glucose concentration. It increases cell permeability to monosaccharides, amino acids and fatty acids. It accelerates glycolysis, the pentose phosphate cycle, and glycogen synthesis in liver. This is Insulin (INS) from Myocastor coypus (Coypu).